We begin with the raw amino-acid sequence, 129 residues long: Trefoil factor 2 (129 aa).

A signal peptide spans 1-23 (MGRRDAQLLAALLVLGLCALAGS). 2 consecutive P-type domains span residues 29–73 (CQCS…FHPL) and 79–122 (DQCV…FFPK). Intrachain disulfides connect cysteine 29/cysteine 127, cysteine 31/cysteine 58, cysteine 42/cysteine 57, cysteine 52/cysteine 69, cysteine 81/cysteine 107, cysteine 91/cysteine 106, and cysteine 101/cysteine 118.

As to expression, stomach.

It is found in the secreted. Inhibits gastrointestinal motility and gastric acid secretion. Could function as a structural component of gastric mucus, possibly by stabilizing glycoproteins in the mucus gel through interactions with carbohydrate side chains. The chain is Trefoil factor 2 (TFF2) from Homo sapiens (Human).